A 481-amino-acid chain; its full sequence is Matrilin-3 (481 aa).

Positions 1 to 27 (MLLSAPLRHLPGLLLLLWPLLLLPSLA) are cleaved as a signal peptide. One can recognise a VWFA domain in the interval 78-253 (DLVFIIDSSR…GVIEKLSARF (176 aa)). Arg193 carries the omega-N-methylarginine modification. EGF-like domains lie at 259-300 (ALDQ…KTCS), 301-342 (AIDK…RTCA), 343-384 (ALDK…KTCS), and 385-426 (VRNK…KTCS). Cystine bridges form between Cys263/Cys274, Cys270/Cys284, Cys286/Cys299, Cys305/Cys316, Cys312/Cys326, Cys328/Cys341, Cys347/Cys358, Cys354/Cys368, Cys370/Cys383, Cys389/Cys400, Cys396/Cys410, and Cys412/Cys425. Asn321 is a glycosylation site (N-linked (GlcNAc...) asparagine). Ser436 bears the Phosphoserine; by FAM20C mark. Residues 451–475 (EKVSSHLQKLNTKLDNILKKLKVTE) adopt a coiled-coil conformation.

Can form homooligomers (monomers, dimers, trimers and tetramers) and heterooligomers with matrilin-1. Interacts with COMP. Component of a complex containing at least CRELD2, MANF, MATN3 and PDIA4. Strongly expressed in growing skeletal tissue such as epiphyseal growth plate or in bone undergoing growth and remodeling. In the bone, actively synthesized in osteoblasts and osteocytes. Expressed in cartilage of sternum, femur, vertebrae, trachea, articular and epiphyseal cartilage, cartilage of developing bones and bones.

It localises to the secreted. Its function is as follows. Major component of the extracellular matrix of cartilage and may play a role in the formation of extracellular filamentous networks. In Mus musculus (Mouse), this protein is Matrilin-3 (Matn3).